We begin with the raw amino-acid sequence, 65 residues long: Small ribosomal subunit protein bS21 (65 aa).

The protein belongs to the bacterial ribosomal protein bS21 family.

The polypeptide is Small ribosomal subunit protein bS21 (Acidobacterium capsulatum (strain ATCC 51196 / DSM 11244 / BCRC 80197 / JCM 7670 / NBRC 15755 / NCIMB 13165 / 161)).